Consider the following 478-residue polypeptide: MSKEIKTQVVVLGAGPAGYSAAFRCADLGLETVIVERYSTLGGVCLNVGCIPSKALLHVAKVIEEAKHANKNGIYFSEPRIELDEVRAGKEAVVAKLTGGLAGMAKARKVTVVEGLATFTDSHTLVARDRDGNPTTVKFDNAIIAAGSRPVQLPFIPHEDPRIWDSTDALKLKEVPKKLLIMGGGIIGLEMGTVYNALGSEVEVVEMFDQVIPAADKDVVGIYTKQVEKKFKLMLETKVTAVEAKDDGIYVSMEGKACNDTKRYDAVLVAIGRVPNGKLIDAGKAGVEVDDRGFIHVDKQMRTNVPHIYAIGDIVGQPMLAHKGVHEGHVAAEVIAGQKHYFDPKVIPSIAYTEPEVAWVGKTEKECKQEGLNYEVAKFPWAASGRAIASECSEGMTKLIFDKDTHRVLGGAIVGSNGGELLGEIGLAIEMGCDAEDIALTIHAHPTLHESVGLAAEVFEGSITDLPNAKAKEKIISI.

Residues Glu-36 to Cys-45, Lys-54, and Ala-117 each bind FAD. Cys-45 and Cys-50 are disulfide-bonded. NAD(+) is bound by residues Gly-183–Ile-187, Glu-206, Val-239, and Ala-270–Arg-273. Residues Asp-313 and Ala-321 each coordinate FAD. His-445 serves as the catalytic Proton acceptor.

It belongs to the class-I pyridine nucleotide-disulfide oxidoreductase family. As to quaternary structure, homodimer. FAD serves as cofactor.

The protein resides in the cytoplasm. It catalyses the reaction N(6)-[(R)-dihydrolipoyl]-L-lysyl-[protein] + NAD(+) = N(6)-[(R)-lipoyl]-L-lysyl-[protein] + NADH + H(+). Lipoamide dehydrogenase is a component of the alpha-ketoacid dehydrogenase complexes. This is Dihydrolipoyl dehydrogenase (lpdA) from Haemophilus influenzae (strain ATCC 51907 / DSM 11121 / KW20 / Rd).